A 427-amino-acid polypeptide reads, in one-letter code: Enolase (427 aa).

Gln163 is a binding site for (2R)-2-phosphoglycerate. Glu205 serves as the catalytic Proton donor. The Mg(2+) site is built by Asp242, Glu285, and Asp312. (2R)-2-phosphoglycerate is bound by residues Lys337, Arg366, Ser367, and Lys388. Lys337 (proton acceptor) is an active-site residue.

This sequence belongs to the enolase family. It depends on Mg(2+) as a cofactor.

Its subcellular location is the cytoplasm. The protein resides in the secreted. It localises to the cell surface. The enzyme catalyses (2R)-2-phosphoglycerate = phosphoenolpyruvate + H2O. The protein operates within carbohydrate degradation; glycolysis; pyruvate from D-glyceraldehyde 3-phosphate: step 4/5. Its function is as follows. Catalyzes the reversible conversion of 2-phosphoglycerate (2-PG) into phosphoenolpyruvate (PEP). It is essential for the degradation of carbohydrates via glycolysis. This chain is Enolase, found in Rhodopseudomonas palustris (strain TIE-1).